A 525-amino-acid chain; its full sequence is Glucans biosynthesis protein G (525 aa).

An N-terminal signal peptide occupies residues 1-35 (MIFRSVSNTDFRARVRTLLLAGSTALAFVAAPVWA).

This sequence belongs to the OpgD/OpgG family.

Its subcellular location is the periplasm. It participates in glycan metabolism; osmoregulated periplasmic glucan (OPG) biosynthesis. Involved in the biosynthesis of osmoregulated periplasmic glucans (OPGs). In Pseudomonas paraeruginosa (strain DSM 24068 / PA7) (Pseudomonas aeruginosa (strain PA7)), this protein is Glucans biosynthesis protein G.